A 126-amino-acid chain; its full sequence is Major sperm protein 3 (126 aa).

The residue at position 2 (Ala2) is an N-acetylalanine. Positions 8–125 constitute an MSP domain; the sequence is DIATMPAQKV…RRKNLPIEYN (118 aa).

In terms of tissue distribution, sperm.

The protein localises to the cell projection. The protein resides in the pseudopodium. Its subcellular location is the cytoplasm. It localises to the cytoskeleton. In terms of biological role, central component in molecular interactions underlying sperm crawling. Forms an extensive filament system that extends from sperm villipoda, along the leading edge of the pseudopod. In Globodera rostochiensis (Golden nematode worm), this protein is Major sperm protein 3 (MSP-3).